The following is a 407-amino-acid chain: POC1 centriolar protein homolog A (407 aa).

WD repeat units lie at residues G17 to R56, G59 to V98, A101 to S140, Q143 to S182, E185 to H224, L227 to T266, and G269 to G308. The interval P317–Q357 is disordered. Polar residues predominate over residues Q342–Q357. The stretch at Q369–N397 forms a coiled coil.

Belongs to the WD repeat POC1 family. As to quaternary structure, interacts with POC1B.

It is found in the cytoplasm. It localises to the cytoskeleton. The protein localises to the microtubule organizing center. The protein resides in the centrosome. Its subcellular location is the centriole. It is found in the cilium basal body. It localises to the spindle pole. Plays an important role in centriole assembly and/or stability and ciliogenesis. Involved in early steps of centriole duplication, as well as in the later steps of centriole length control. Acts in concert with POC1B to ensure centriole integrity and proper mitotic spindle formation. This chain is POC1 centriolar protein homolog A (POC1A), found in Bos taurus (Bovine).